A 680-amino-acid chain; its full sequence is Epithelial splicing regulatory protein 1 (680 aa).

3 consecutive RRM domains span residues 224-301 (TVVR…KATG), 325-405 (VIVR…RSTA), and 444-524 (DCIR…QCSA). Serine 542 carries the post-translational modification Phosphoserine. An Omega-N-methylarginine modification is found at arginine 581.

The protein belongs to the ESRP family. Epithelial cell-specific. Epithelial-specific expression in diverse tissues and organs with particularly notable levels of expression in skin and gastrointestinal epithelia.

It is found in the nucleus. MRNA splicing factor that regulates the formation of epithelial cell-specific isoforms. Specifically regulates the expression of FGFR2-IIIb, an epithelial cell-specific isoform of FGFR2. Also regulates the splicing of CD44, CTNND1, ENAH, 3 transcripts that undergo changes in splicing during the epithelial-to-mesenchymal transition (EMT). Acts by directly binding specific sequences in mRNAs. Binds the GU-rich sequence motifs in the ISE/ISS-3, a cis-element regulatory region present in the mRNA of FGFR2. Regulates splicing and expression of genes involved in inner ear development, auditory hair cell differentiation, and cell fate specification in the cochlear epithelium. This is Epithelial splicing regulatory protein 1 (Esrp1) from Mus musculus (Mouse).